The following is a 219-amino-acid chain: Putative GEM-like protein 8 (219 aa).

A GRAM domain is found at 96-174; the sequence is KIYKRLFKVS…CKINGVNQSQ (79 aa).

This sequence belongs to the GEM family.

This chain is Putative GEM-like protein 8, found in Arabidopsis thaliana (Mouse-ear cress).